Consider the following 493-residue polypeptide: Probable glycine dehydrogenase (decarboxylating) subunit 2 (493 aa).

Lysine 269 carries the post-translational modification N6-(pyridoxal phosphate)lysine.

It belongs to the GcvP family. C-terminal subunit subfamily. In terms of assembly, the glycine cleavage system is composed of four proteins: P, T, L and H. In this organism, the P 'protein' is a heterodimer of two subunits. Pyridoxal 5'-phosphate serves as cofactor.

The enzyme catalyses N(6)-[(R)-lipoyl]-L-lysyl-[glycine-cleavage complex H protein] + glycine + H(+) = N(6)-[(R)-S(8)-aminomethyldihydrolipoyl]-L-lysyl-[glycine-cleavage complex H protein] + CO2. The glycine cleavage system catalyzes the degradation of glycine. The P protein binds the alpha-amino group of glycine through its pyridoxal phosphate cofactor; CO(2) is released and the remaining methylamine moiety is then transferred to the lipoamide cofactor of the H protein. This chain is Probable glycine dehydrogenase (decarboxylating) subunit 2, found in Chloroherpeton thalassium (strain ATCC 35110 / GB-78).